Consider the following 98-residue polypeptide: Small ribosomal subunit protein bS20 (98 aa).

This sequence belongs to the bacterial ribosomal protein bS20 family.

Functionally, binds directly to 16S ribosomal RNA. This is Small ribosomal subunit protein bS20 from Prochlorococcus marinus (strain NATL1A).